The primary structure comprises 299 residues: Protein PRY1 (299 aa).

Positions 1–19 (MKLSKLSILTSALATSALA) are cleaved as a signal peptide. Residues 103–157 (TDSTTTLTSSESTSQSLAQATTTSTPAAASTTSTPAATTTTSQAAATSSASSSDS) form a disordered region. The 115-residue stretch at 167-281 (LAEHNKKRAL…AWGDYVICSY (115 aa)) folds into the SCP domain.

It belongs to the CRISP family. In terms of processing, O-glycosylated.

It is found in the secreted. In terms of biological role, secreted protein required for efficient export of lipids such as acetylated sterols. Acts in detoxification of hydrophobic compounds. This is Protein PRY1 from Saccharomyces cerevisiae (strain ATCC 204508 / S288c) (Baker's yeast).